We begin with the raw amino-acid sequence, 515 residues long: Probable cytochrome P450 6d4 (515 aa).

Cys-457 contacts heme.

This sequence belongs to the cytochrome P450 family. Heme serves as cofactor.

The protein resides in the endoplasmic reticulum membrane. Its subcellular location is the microsome membrane. Functionally, may be involved in the metabolism of insect hormones and in the breakdown of synthetic insecticides. The polypeptide is Probable cytochrome P450 6d4 (Cyp6d4) (Drosophila melanogaster (Fruit fly)).